The following is a 187-amino-acid chain: NADH-quinone oxidoreductase subunit C 2 (187 aa).

Residues 153–187 are disordered; the sequence is YKDKLNPFGAEGPPPTQPDLATRDIPQGRPSTPES.

The protein belongs to the complex I 30 kDa subunit family. NDH-1 is composed of 14 different subunits. Subunits NuoB, C, D, E, F, and G constitute the peripheral sector of the complex.

The protein localises to the cell inner membrane. It catalyses the reaction a quinone + NADH + 5 H(+)(in) = a quinol + NAD(+) + 4 H(+)(out). Its function is as follows. NDH-1 shuttles electrons from NADH, via FMN and iron-sulfur (Fe-S) centers, to quinones in the respiratory chain. The immediate electron acceptor for the enzyme in this species is believed to be ubiquinone. Couples the redox reaction to proton translocation (for every two electrons transferred, four hydrogen ions are translocated across the cytoplasmic membrane), and thus conserves the redox energy in a proton gradient. The polypeptide is NADH-quinone oxidoreductase subunit C 2 (Rhizobium etli (strain CIAT 652)).